A 319-amino-acid polypeptide reads, in one-letter code: L-tryptophan isonitrile synthase AmbI1 (319 aa).

This sequence belongs to the isocyanide synthase family.

It catalyses the reaction D-ribulose 5-phosphate + L-tryptophan = (2S)-3-(1H-indol-3-yl)-2-isocyanopropanoate + hydroxyacetone + formaldehyde + phosphate + H2O + H(+). Its function is as follows. Involved in the biosynthesis of ambiguines, a family of hapalindole-type alkaloids. Responsible for the synthesis of the isonitrile group on tryptophan using ribulose 5-phosphate as the source of the carbon atom. This chain is L-tryptophan isonitrile synthase AmbI1, found in Fischerella ambigua (strain UTEX 1903).